The chain runs to 118 residues: Basic phospholipase A2 PA-10A (118 aa).

7 disulfides stabilise this stretch: Cys11/Cys71, Cys27/Cys117, Cys29/Cys45, Cys44/Cys98, Cys51/Cys91, Cys60/Cys84, and Cys78/Cys89. Residues Tyr28, Gly30, and Gly32 each coordinate Ca(2+). Residue His48 is part of the active site. Asp49 is a binding site for Ca(2+). Asp92 is a catalytic residue.

Belongs to the phospholipase A2 family. Group I subfamily. D49 sub-subfamily. Requires Ca(2+) as cofactor. In terms of tissue distribution, expressed by the venom gland.

The protein resides in the secreted. It carries out the reaction a 1,2-diacyl-sn-glycero-3-phosphocholine + H2O = a 1-acyl-sn-glycero-3-phosphocholine + a fatty acid + H(+). Functionally, PLA2 catalyzes the calcium-dependent hydrolysis of the 2-acyl groups in 3-sn-phosphoglycerides. The sequence is that of Basic phospholipase A2 PA-10A from Pseudechis australis (Mulga snake).